A 155-amino-acid chain; its full sequence is Small ribosomal subunit protein uS7c (155 aa).

It belongs to the universal ribosomal protein uS7 family. As to quaternary structure, part of the 30S ribosomal subunit.

It is found in the plastid. The protein localises to the chloroplast. One of the primary rRNA binding proteins, it binds directly to 16S rRNA where it nucleates assembly of the head domain of the 30S subunit. The chain is Small ribosomal subunit protein uS7c (rps7) from Cryptomeria japonica (Japanese cedar).